Reading from the N-terminus, the 438-residue chain is Aspartate--tRNA(Asp) ligase (438 aa).

Residue Glu170 coordinates L-aspartate. The tract at residues 192–195 (QLYK) is aspartate. Residue Arg214 participates in L-aspartate binding. ATP contacts are provided by residues 214 to 216 (RAE), 222 to 224 (RHL), and Glu361. Residues Glu361 and Ser364 each contribute to the Mg(2+) site. The L-aspartate site is built by Ser364 and Arg368. 409 to 412 (GAER) serves as a coordination point for ATP.

The protein belongs to the class-II aminoacyl-tRNA synthetase family. Type 2 subfamily. Homodimer. Mg(2+) is required as a cofactor.

The protein resides in the cytoplasm. The catalysed reaction is tRNA(Asp) + L-aspartate + ATP = L-aspartyl-tRNA(Asp) + AMP + diphosphate. Catalyzes the attachment of L-aspartate to tRNA(Asp) in a two-step reaction: L-aspartate is first activated by ATP to form Asp-AMP and then transferred to the acceptor end of tRNA(Asp). Is specific for tRNA(Asp) since it aspartylates tRNA(Asn) 3 orders of magnitude less efficiently than tRNA(Asp). The polypeptide is Aspartate--tRNA(Asp) ligase (Thermococcus kodakarensis (strain ATCC BAA-918 / JCM 12380 / KOD1) (Pyrococcus kodakaraensis (strain KOD1))).